The following is a 176-amino-acid chain: ATP-dependent protease subunit HslV (176 aa).

Threonine 6 is an active-site residue. Serine 161, cysteine 164, and threonine 167 together coordinate Na(+).

This sequence belongs to the peptidase T1B family. HslV subfamily. A double ring-shaped homohexamer of HslV is capped on each side by a ring-shaped HslU homohexamer. The assembly of the HslU/HslV complex is dependent on binding of ATP.

The protein localises to the cytoplasm. The catalysed reaction is ATP-dependent cleavage of peptide bonds with broad specificity.. With respect to regulation, allosterically activated by HslU binding. Protease subunit of a proteasome-like degradation complex believed to be a general protein degrading machinery. The protein is ATP-dependent protease subunit HslV of Pseudothermotoga lettingae (strain ATCC BAA-301 / DSM 14385 / NBRC 107922 / TMO) (Thermotoga lettingae).